The chain runs to 260 residues: Flap endonuclease Xni (260 aa).

Aspartate 105 is a Mg(2+) binding site. The 5'-3' exonuclease domain occupies 164–259 (NQFLDLMALA…VNGPANTQQA (96 aa)). Residues leucine 172, alanine 173, proline 181, isoleucine 183, and isoleucine 186 each coordinate K(+). Residues 185–190 (GIGPKS) are interaction with DNA.

This sequence belongs to the Xni family. Requires Mg(2+) as cofactor. K(+) serves as cofactor.

Has flap endonuclease activity. During DNA replication, flap endonucleases cleave the 5'-overhanging flap structure that is generated by displacement synthesis when DNA polymerase encounters the 5'-end of a downstream Okazaki fragment. The protein is Flap endonuclease Xni of Shewanella sp. (strain MR-4).